The primary structure comprises 277 residues: Phosphoenolpyruvate synthase regulatory protein (277 aa).

157–164 (GVSRCGKT) is an ADP binding site.

This sequence belongs to the pyruvate, phosphate/water dikinase regulatory protein family. PSRP subfamily.

It carries out the reaction [pyruvate, water dikinase] + ADP = [pyruvate, water dikinase]-phosphate + AMP + H(+). It catalyses the reaction [pyruvate, water dikinase]-phosphate + phosphate + H(+) = [pyruvate, water dikinase] + diphosphate. Its function is as follows. Bifunctional serine/threonine kinase and phosphorylase involved in the regulation of the phosphoenolpyruvate synthase (PEPS) by catalyzing its phosphorylation/dephosphorylation. The sequence is that of Phosphoenolpyruvate synthase regulatory protein from Escherichia coli O6:K15:H31 (strain 536 / UPEC).